The sequence spans 269 residues: 4-hydroxy-tetrahydrodipicolinate reductase (269 aa).

NAD(+) contacts are provided by residues 11 to 16 (GASGRM) and Glu-37. NADP(+) is bound at residue Arg-38. NAD(+) is bound by residues 101 to 103 (GTT) and 125 to 128 (AGNM). Catalysis depends on His-158, which acts as the Proton donor/acceptor. A (S)-2,3,4,5-tetrahydrodipicolinate-binding site is contributed by His-159. The active-site Proton donor is the Lys-162. Position 168–169 (168–169 (GT)) interacts with (S)-2,3,4,5-tetrahydrodipicolinate.

The protein belongs to the DapB family.

Its subcellular location is the cytoplasm. The catalysed reaction is (S)-2,3,4,5-tetrahydrodipicolinate + NAD(+) + H2O = (2S,4S)-4-hydroxy-2,3,4,5-tetrahydrodipicolinate + NADH + H(+). The enzyme catalyses (S)-2,3,4,5-tetrahydrodipicolinate + NADP(+) + H2O = (2S,4S)-4-hydroxy-2,3,4,5-tetrahydrodipicolinate + NADPH + H(+). The protein operates within amino-acid biosynthesis; L-lysine biosynthesis via DAP pathway; (S)-tetrahydrodipicolinate from L-aspartate: step 4/4. Catalyzes the conversion of 4-hydroxy-tetrahydrodipicolinate (HTPA) to tetrahydrodipicolinate. This is 4-hydroxy-tetrahydrodipicolinate reductase from Cereibacter sphaeroides (strain ATCC 17023 / DSM 158 / JCM 6121 / CCUG 31486 / LMG 2827 / NBRC 12203 / NCIMB 8253 / ATH 2.4.1.) (Rhodobacter sphaeroides).